Consider the following 158-residue polypeptide: Transcription elongation factor GreA (158 aa).

It belongs to the GreA/GreB family.

Functionally, necessary for efficient RNA polymerase transcription elongation past template-encoded arresting sites. The arresting sites in DNA have the property of trapping a certain fraction of elongating RNA polymerases that pass through, resulting in locked ternary complexes. Cleavage of the nascent transcript by cleavage factors such as GreA or GreB allows the resumption of elongation from the new 3'terminus. GreA releases sequences of 2 to 3 nucleotides. The chain is Transcription elongation factor GreA from Yersinia pestis.